The chain runs to 180 residues: Oligoribonuclease (180 aa).

Residues Leu-7–Leu-170 form the Exonuclease domain. The active site involves Tyr-128.

The protein belongs to the oligoribonuclease family.

The protein localises to the cytoplasm. Functionally, 3'-to-5' exoribonuclease specific for small oligoribonucleotides. The sequence is that of Oligoribonuclease from Pectobacterium atrosepticum (strain SCRI 1043 / ATCC BAA-672) (Erwinia carotovora subsp. atroseptica).